Here is a 321-residue protein sequence, read N- to C-terminus: NADH-ubiquinone oxidoreductase chain 1 (321 aa).

8 helical membrane passes run 6–26 (IVPP…LTAL), 67–87 (LLAT…LALA), 103–123 (LGLL…LWSG), 143–163 (ISYE…SGGF), 174–194 (PLYL…STLA), 220–240 (ASPF…MNTL), 256–276 (ALFT…FLWV), and 296–316 (FLPM…SMFG).

Belongs to the complex I subunit 1 family.

The protein localises to the mitochondrion inner membrane. The enzyme catalyses a ubiquinone + NADH + 5 H(+)(in) = a ubiquinol + NAD(+) + 4 H(+)(out). In terms of biological role, core subunit of the mitochondrial membrane respiratory chain NADH dehydrogenase (Complex I) that is believed to belong to the minimal assembly required for catalysis. Complex I functions in the transfer of electrons from NADH to the respiratory chain. The immediate electron acceptor for the enzyme is believed to be ubiquinone. The protein is NADH-ubiquinone oxidoreductase chain 1 (MT-ND1) of Alligator mississippiensis (American alligator).